The sequence spans 91 residues: N(2)-fixation sustaining protein CowN (91 aa).

Belongs to the CowN family.

Functionally, is required to sustain N(2)-dependent growth in the presence of low levels of carbon monoxide (CO). Probably acts by protecting the N(2) fixation ability of the nitrogenase complex, which is inactivated in the presence of CO. The protein is N(2)-fixation sustaining protein CowN of Gluconacetobacter diazotrophicus (strain ATCC 49037 / DSM 5601 / CCUG 37298 / CIP 103539 / LMG 7603 / PAl5).